The chain runs to 317 residues: L-lactate dehydrogenase (317 aa).

Residues V17, D38, K43, and 82–83 contribute to the NAD(+) site; that span reads GA. Substrate is bound by residues Q85, R91, and 123–126; that span reads NPVD. Residues 121 to 123 and S146 contribute to the NAD(+) site; that span reads VAN. 151–154 lines the substrate pocket; sequence DSAR. Positions 156 and 171 each coordinate beta-D-fructose 1,6-bisphosphate. The active-site Proton acceptor is H178. Residue Y224 is modified to Phosphotyrosine. A substrate-binding site is contributed by T233.

The protein belongs to the LDH/MDH superfamily. LDH family. In terms of assembly, homotetramer.

The protein localises to the cytoplasm. It catalyses the reaction (S)-lactate + NAD(+) = pyruvate + NADH + H(+). The protein operates within fermentation; pyruvate fermentation to lactate; (S)-lactate from pyruvate: step 1/1. Its activity is regulated as follows. Allosterically activated by fructose 1,6-bisphosphate (FBP). Catalyzes the conversion of lactate to pyruvate. The polypeptide is L-lactate dehydrogenase (Moorella thermoacetica (strain ATCC 39073 / JCM 9320)).